The chain runs to 682 residues: Methionine--tRNA ligase (682 aa).

A 'HIGH' region motif is present at residues 15–25 (PYANGAIHLGH). Residues Cys146, Cys149, Cys159, and Cys162 each coordinate Zn(2+). The short motif at 331–335 (KMSKS) is the 'KMSKS' region element. Lys334 is a binding site for ATP. The 103-residue stretch at 580–682 (DFAKLDMRVA…NGVTAGMQVK (103 aa)) folds into the tRNA-binding domain.

This sequence belongs to the class-I aminoacyl-tRNA synthetase family. MetG type 1 subfamily. In terms of assembly, homodimer. The cofactor is Zn(2+).

The protein resides in the cytoplasm. The catalysed reaction is tRNA(Met) + L-methionine + ATP = L-methionyl-tRNA(Met) + AMP + diphosphate. Is required not only for elongation of protein synthesis but also for the initiation of all mRNA translation through initiator tRNA(fMet) aminoacylation. This chain is Methionine--tRNA ligase, found in Haemophilus influenzae (strain PittGG).